The sequence spans 131 residues: UPF0102 protein YraN (131 aa).

A compositionally biased stretch (polar residues) spans 1 to 19 (MATVPTRSGSPRQLTTKQT). The tract at residues 1 to 21 (MATVPTRSGSPRQLTTKQTGD) is disordered.

Belongs to the UPF0102 family.

The protein is UPF0102 protein YraN of Escherichia coli O127:H6 (strain E2348/69 / EPEC).